Consider the following 227-residue polypeptide: MKNILKVFNTMILALIIIIATFSNTANAADSGTLNYEVYKYNTNDTSIANDYFNKPAKYIKKNGKLYVQITVNHSHWITGMSIEGHKERIISKNTAKDERTSEFEVSKLNGKIDGKIDVYIDEKVNGKPFKYDHHYNITYKFNGPSDVAGANAPGKDDKNSASGSDKGSDGATTGQSESNSSNKDKVENPQTNAGTPAYIYAIPVASLALLIAITLFVRKKSKGNVE.

The first 28 residues, 1–28 (MKNILKVFNTMILALIIIIATFSNTANA), serve as a signal peptide directing secretion. Positions 29–150 (ADSGTLNYEV…KFNGPSDVAG (122 aa)) constitute an NEAT domain. The heme site is built by S47, I48, Y132, and Y136. Residues 149–191 (AGANAPGKDDKNSASGSDKGSDGATTGQSESNSSNKDKVENPQ) are disordered. Over residues 161-172 (SASGSDKGSDGA) the composition is skewed to low complexity. A compositionally biased stretch (polar residues) spans 173-182 (TTGQSESNSS). The NPQTN sorting signal motif lies at 189 to 193 (NPQTN). T192 is subject to Pentaglycyl murein peptidoglycan amidated threonine. A propeptide spans 193–227 (NAGTPAYIYAIPVASLALLIAITLFVRKKSKGNVE) (removed by sortase B).

Belongs to the IsdC family. Monomer. Interacts with IsdA.

It localises to the secreted. It is found in the cell wall. Functionally, involved in heme (porphyrin) scavenging. Binds hemoglobin and almost exclusively free-base protoporphyrin IX. Probably has a role as the central conduit of the isd heme uptake system, i.e. mediates the transfer of the iron-containing nutrient from IsdABH to the membrane translocation system IsdDEF. Hemin-free IsdC (apo-IsdC) acquires hemin from hemin-containing IsdA (holo-IsdA) probably through the activated holo-IsdA-apo-IsdC complex and due to the higher affinity of apo-IsdC for the cofactor. The reaction is reversible. The chain is Iron-regulated surface determinant protein C (isdC) from Staphylococcus aureus (strain MRSA252).